Here is a 456-residue protein sequence, read N- to C-terminus: MQQTVTYGAKWKQFLTIFTPIVITQLTLFSMTFFDTTMSGNYSNQALAGVAIGSSFWAPVNAAFSGLLMAITPIIAQLIGAKKEKQVKNTVHNGLYIALFLAFILILINFLVVPTILTHMPVTAEVAGIARHFLNGICIGIPAFFISAILRSFIDSLGLTRVTMLITLCTVPFNIFLNYCFIFGNFGFPEMGGAGSGYATGITYWLVVLVSVILIQTQTRLRKFGIFKGLTALRFSKIKEIIGIGVPNGLTILFETSIFSAVTILMGAFGTETIAAHQSANSVCTLLYAFPLSVASTLTILGGYETGAKRLKDAKQYRHIGMAAAIFIGCVNGAILFFFRDIIAGFYTNDPALSNLIMHFLVYAILFQFADAVLSPVLGALRGYKDVTVTSIVAFISYWLIGLPVGYGLSFTNLGPFGYWIGLSTGLFVAAFILSIRVRKTEQKLSFNTKDAEISS.

12 consecutive transmembrane segments (helical) span residues 13-34 (QFLT…MTFF), 54-76 (SSFW…PIIA), 95-117 (LYIA…PTIL), 132-154 (HFLN…RSFI), 161-183 (RVTM…CFIF), 193-215 (GAGS…VILI), 244-266 (IGVP…TILM), 286-308 (LLYA…ETGA), 321-343 (GMAA…RDII), 358-380 (MHFL…VLGA), 387-409 (VTVT…GYGL), and 414-436 (LGPF…ILSI).

This sequence belongs to the multi antimicrobial extrusion (MATE) (TC 2.A.66.1) family.

Its subcellular location is the cell membrane. Functionally, multidrug efflux pump. The chain is Probable multidrug resistance protein NorM (norM) from Listeria monocytogenes serotype 4b (strain F2365).